A 92-amino-acid polypeptide reads, in one-letter code: Putative pterin-4-alpha-carbinolamine dehydratase (92 aa).

This sequence belongs to the pterin-4-alpha-carbinolamine dehydratase family.

It carries out the reaction (4aS,6R)-4a-hydroxy-L-erythro-5,6,7,8-tetrahydrobiopterin = (6R)-L-erythro-6,7-dihydrobiopterin + H2O. This Cereibacter sphaeroides (strain ATCC 17023 / DSM 158 / JCM 6121 / CCUG 31486 / LMG 2827 / NBRC 12203 / NCIMB 8253 / ATH 2.4.1.) (Rhodobacter sphaeroides) protein is Putative pterin-4-alpha-carbinolamine dehydratase.